A 252-amino-acid chain; its full sequence is Flap endonuclease Xni (252 aa).

Position 105 (Asp105) interacts with Mg(2+). The 90-residue stretch at 162 to 251 (EQYQFLDFIA…EINLKQFRVK (90 aa)) folds into the 5'-3' exonuclease domain. 5 residues coordinate K(+): Leu172, Ala173, Pro181, Ile183, and Ile186. Positions 185 to 190 (GIGPKS) are interaction with DNA.

This sequence belongs to the Xni family. It depends on Mg(2+) as a cofactor. The cofactor is K(+).

Has flap endonuclease activity. During DNA replication, flap endonucleases cleave the 5'-overhanging flap structure that is generated by displacement synthesis when DNA polymerase encounters the 5'-end of a downstream Okazaki fragment. This is Flap endonuclease Xni from Shewanella denitrificans (strain OS217 / ATCC BAA-1090 / DSM 15013).